Reading from the N-terminus, the 377-residue chain is Putative F-box only protein 10 (377 aa).

Residues 1-46 (MVSVNLPWELVEEILYRVPPQSLARFRTVCKQWNSLFDDNKFVNDH) enclose the F-box domain.

This chain is Putative F-box only protein 10 (FBX10), found in Arabidopsis thaliana (Mouse-ear cress).